A 224-amino-acid polypeptide reads, in one-letter code: MYSNKNDKDKDKDQNNENNKNNDDEAISLKILVVGKLACGKTSIIQRYCHNNFQPKYKPTIGVDFQQKVLEIMGQKVLLQLWDIAGQERFGHMTRVYFQNAHGAVIVFDATRSGTFLGAKAWKDDIDYCFNNENLPTILLANKCDLLTPPYTFPEDINTFCEQNRFNKYFYTSAKEDTGINEALEELVKIILESYQTQEQSTGFKLSDQSQSTETTPTQSKTCC.

A disordered region spans residues 1 to 22 (MYSNKNDKDKDKDQNNENNKNN). 35–42 (GKLACGKT) is a binding site for GTP. The short motif at 57–65 (YKPTIGVDF) is the Effector region element. GTP contacts are provided by residues 83–87 (DIAGQ) and 142–145 (NKCD). Residues 203 to 224 (GFKLSDQSQSTETTPTQSKTCC) are disordered. Residues 209 to 224 (QSQSTETTPTQSKTCC) show a composition bias toward low complexity. Residues C223 and C224 are each lipidated (S-geranylgeranyl cysteine).

The protein belongs to the small GTPase superfamily. Rab family.

This is Ras-related protein Rab-32C (rab32C) from Dictyostelium discoideum (Social amoeba).